The primary structure comprises 328 residues: DNA-directed RNA polymerase subunit alpha (328 aa).

The segment at 1 to 233 is alpha N-terminal domain (alpha-NTD); it reads MHNSATEFLK…EQLEAFIDLR (233 aa). The interval 247-328 is alpha C-terminal domain (alpha-CTD); it reads FDPVLLRPVD…WPPVSILKND (82 aa).

This sequence belongs to the RNA polymerase alpha chain family. In terms of assembly, homodimer. The RNAP catalytic core consists of 2 alpha, 1 beta, 1 beta' and 1 omega subunit. When a sigma factor is associated with the core the holoenzyme is formed, which can initiate transcription.

It catalyses the reaction RNA(n) + a ribonucleoside 5'-triphosphate = RNA(n+1) + diphosphate. Functionally, DNA-dependent RNA polymerase catalyzes the transcription of DNA into RNA using the four ribonucleoside triphosphates as substrates. This chain is DNA-directed RNA polymerase subunit alpha, found in Wigglesworthia glossinidia brevipalpis.